Here is a 177-residue protein sequence, read N- to C-terminus: Large ribosomal subunit protein uL6 (177 aa).

The segment at 155-177 (EPYKGKGVKHADERIFRKEGKKK) is disordered.

It belongs to the universal ribosomal protein uL6 family. In terms of assembly, part of the 50S ribosomal subunit.

Its function is as follows. This protein binds to the 23S rRNA, and is important in its secondary structure. It is located near the subunit interface in the base of the L7/L12 stalk, and near the tRNA binding site of the peptidyltransferase center. The protein is Large ribosomal subunit protein uL6 of Bartonella tribocorum (strain CIP 105476 / IBS 506).